A 339-amino-acid polypeptide reads, in one-letter code: D-erythrose-4-phosphate dehydrogenase (339 aa).

NAD(+)-binding positions include 12 to 13 (RI) and R81. Substrate contacts are provided by residues 154–156 (SCT), R200, 213–214 (TK), and R236. Catalysis depends on C155, which acts as the Nucleophile. N318 is a binding site for NAD(+).

The protein belongs to the glyceraldehyde-3-phosphate dehydrogenase family. Epd subfamily. Homotetramer.

It is found in the cytoplasm. The catalysed reaction is D-erythrose 4-phosphate + NAD(+) + H2O = 4-phospho-D-erythronate + NADH + 2 H(+). It participates in cofactor biosynthesis; pyridoxine 5'-phosphate biosynthesis; pyridoxine 5'-phosphate from D-erythrose 4-phosphate: step 1/5. Its function is as follows. Catalyzes the NAD-dependent conversion of D-erythrose 4-phosphate to 4-phosphoerythronate. The protein is D-erythrose-4-phosphate dehydrogenase of Escherichia coli O45:K1 (strain S88 / ExPEC).